The sequence spans 140 residues: Baculoviral IAP repeat-containing protein 5 (140 aa).

One copy of the BIR repeat lies at 18–88 (RIATFKNWPF…KHSPGCAFLT (71 aa)). Residue Lys-23 is modified to N6-acetyllysine. Thr-34 is modified (phosphothreonine; by CDK1 and CDK15). Thr-48 bears the Phosphothreonine mark. Residues Cys-57, Cys-60, Glu-76, His-77, His-80, and Cys-84 each coordinate Zn(2+). N6-acetyllysine occurs at positions 90, 110, 112, and 115. Over residues 113-129 (IAKETNNKQKEFEETAK) the composition is skewed to basic and acidic residues. The tract at residues 113–140 (IAKETNNKQKEFEETAKTTRQSIEQLAA) is disordered. Thr-117 carries the post-translational modification Phosphothreonine; by AURKB. Lys-129 is subject to N6-acetyllysine. The segment covering 130–140 (TTRQSIEQLAA) has biased composition (polar residues).

This sequence belongs to the IAP family. In terms of assembly, monomer or homodimer. Exists as a homodimer in the apo state and as a monomer in the CPC-bound state. The monomer protects cells against apoptosis more efficiently than the dimer. Only the dimeric form is capable of enhancing tubulin stability in cells. When phosphorylated, interacts with LAMTOR5/HBXIP; the resulting complex binds pro-CASP9, as well as active CASP9, but much less efficiently. Component of the chromosomal passenger complex (CPC) composed of at least BIRC5/survivin, CDCA8/borealin, INCENP, AURKB or AURKC; in the complex forms a triple-helix bundle-based subcomplex with INCENP and CDCA8. Interacts with JTB. Interacts (via BIR domain) with histone H3 phosphorylated at 'Thr-3' (H3pT3). Interacts with EVI5. Interacts with GTP-bound RAN in both the S and M phases of the cell cycle. Interacts with USP9X. Interacts with tubulin. Interacts with BIRC2/c-IAP1. The acetylated form at Lys-129 interacts with STAT3. The monomeric form deacetylated at Lys-129 interacts with XPO1/CRM1. The monomeric form interacts with XIAP/BIRC4. Both the dimeric and monomeric form can interact with DIABLO/SMAC. Interacts with BIRC6/bruce. Interacts with FBXL7; this interaction facilitates the polyubiquitination and subsequent proteasomal degradation of BIRC5 by the SCF(FBXL7) E3 ubiquitin-protein ligase complex. In terms of processing, ubiquitinated by the Cul9-RING ubiquitin-protein ligase complex, leading to its degradation. Ubiquitination is required for centrosomal targeting. Deubiquitinated by USP35 or USP38; leading to stabilization. Post-translationally, acetylation at Lys-129 results in its homodimerization, while deacetylation promotes the formation of monomers which heterodimerize with XPO1/CRM1 which facilitates its nuclear export. The acetylated form represses STAT3 transactivation. The dynamic equilibrium between its acetylation and deacetylation at Lys-129 determines its interaction with XPO1/CRM1, its subsequent subcellular localization, and its ability to inhibit STAT3 transactivation. In vitro phosphorylation at Thr-117 by AURKB prevents interaction with INCENP and localization to mitotic chromosomes. Phosphorylation at Thr-48 by CK2 is critical for its mitotic and anti-apoptotic activities. Phosphorylation at Thr-34 by CDK15 is critical for its anti-apoptotic activity.

The protein resides in the cytoplasm. Its subcellular location is the nucleus. It localises to the chromosome. The protein localises to the centromere. It is found in the cytoskeleton. The protein resides in the spindle. Its subcellular location is the kinetochore. It localises to the midbody. Functionally, multitasking protein that has dual roles in promoting cell proliferation and preventing apoptosis. Component of a chromosome passage protein complex (CPC) which is essential for chromosome alignment and segregation during mitosis and cytokinesis. Acts as an important regulator of the localization of this complex; directs CPC movement to different locations from the inner centromere during prometaphase to midbody during cytokinesis and participates in the organization of the center spindle by associating with polymerized microtubules. Involved in the recruitment of CPC to centromeres during early mitosis via association with histone H3 phosphorylated at 'Thr-3' (H3pT3) during mitosis. The complex with RAN plays a role in mitotic spindle formation by serving as a physical scaffold to help deliver the RAN effector molecule TPX2 to microtubules. May counteract a default induction of apoptosis in G2/M phase. The acetylated form represses STAT3 transactivation of target gene promoters. May play a role in neoplasia. Inhibitor of CASP3 and CASP7. Essential for the maintenance of mitochondrial integrity and function. This is Baculoviral IAP repeat-containing protein 5 (Birc5) from Mus musculus (Mouse).